Reading from the N-terminus, the 956-residue chain is Zinc protease PQQL-like (956 aa).

Met-1 carries the post-translational modification N-acetylmethionine. His-85 provides a ligand contact to Zn(2+). Glu-88 functions as the Proton acceptor in the catalytic mechanism. His-89 provides a ligand contact to Zn(2+). Glu-165 is a catalytic residue. Residue Glu-172 coordinates Zn(2+).

The protein belongs to the peptidase M16 family. Zn(2+) serves as cofactor.

In Arabidopsis thaliana (Mouse-ear cress), this protein is Zinc protease PQQL-like.